Here is a 499-residue protein sequence, read N- to C-terminus: Lanosterol 14-alpha demethylase (499 aa).

A helical membrane pass occupies residues 13 to 35 (SAVLQMSLTSVLLTASVFTLTLG). Residue Cys441 coordinates heme.

It belongs to the cytochrome P450 family. The cofactor is heme. As to expression, strongly expressed in intestine. Moderately expressed in liver, with higher levels in females compared to males. Also detected at low levels in brain, eye, kidney and testis.

The protein localises to the endoplasmic reticulum membrane. It is found in the membrane. The catalysed reaction is a 14alpha-methyl steroid + 3 reduced [NADPH--hemoprotein reductase] + 3 O2 = a Delta(14) steroid + formate + 3 oxidized [NADPH--hemoprotein reductase] + 4 H2O + 4 H(+). It catalyses the reaction lanosterol + 3 reduced [NADPH--hemoprotein reductase] + 3 O2 = 4,4-dimethyl-5alpha-cholesta-8,14,24-trien-3beta-ol + formate + 3 oxidized [NADPH--hemoprotein reductase] + 4 H2O + 4 H(+). It carries out the reaction 24,25-dihydrolanosterol + 3 reduced [NADPH--hemoprotein reductase] + 3 O2 = 4,4-dimethyl-8,14-cholestadien-3beta-ol + formate + 3 oxidized [NADPH--hemoprotein reductase] + 4 H2O + 4 H(+). The enzyme catalyses a 14alpha-methyl steroid + reduced [NADPH--hemoprotein reductase] + O2 = a 14alpha-hydroxymethyl steroid + oxidized [NADPH--hemoprotein reductase] + H2O + H(+). The catalysed reaction is a 14alpha-hydroxymethyl steroid + reduced [NADPH--hemoprotein reductase] + O2 = a 14alpha-formyl steroid + oxidized [NADPH--hemoprotein reductase] + 2 H2O + H(+). It catalyses the reaction a 14alpha-formyl steroid + reduced [NADPH--hemoprotein reductase] + O2 = a Delta(14) steroid + formate + oxidized [NADPH--hemoprotein reductase] + H2O + 2 H(+). It carries out the reaction lanosterol + reduced [NADPH--hemoprotein reductase] + O2 = 32-hydroxylanosterol + oxidized [NADPH--hemoprotein reductase] + H2O + H(+). The enzyme catalyses 32-hydroxylanosterol + reduced [NADPH--hemoprotein reductase] + O2 = 32-oxolanosterol + oxidized [NADPH--hemoprotein reductase] + 2 H2O + H(+). The catalysed reaction is 32-oxolanosterol + reduced [NADPH--hemoprotein reductase] + O2 = 4,4-dimethyl-5alpha-cholesta-8,14,24-trien-3beta-ol + formate + oxidized [NADPH--hemoprotein reductase] + H2O + 2 H(+). It catalyses the reaction 24,25-dihydrolanosterol + reduced [NADPH--hemoprotein reductase] + O2 = 32-hydroxy-24,25-dihydrolanosterol + oxidized [NADPH--hemoprotein reductase] + H2O + H(+). It carries out the reaction 32-hydroxy-24,25-dihydrolanosterol + reduced [NADPH--hemoprotein reductase] + O2 = 32-oxo-24,25-dihydrolanosterol + oxidized [NADPH--hemoprotein reductase] + 2 H2O + H(+). The enzyme catalyses 32-oxo-24,25-dihydrolanosterol + reduced [NADPH--hemoprotein reductase] + O2 = 4,4-dimethyl-8,14-cholestadien-3beta-ol + formate + oxidized [NADPH--hemoprotein reductase] + H2O + 2 H(+). The protein operates within steroid biosynthesis; zymosterol biosynthesis; zymosterol from lanosterol: step 1/6. With respect to regulation, inhibited by ketoconazole. May also be inhibited to a lesser extent by propiconazole. Sterol 14alpha-demethylase that plays a critical role in the cholesterol biosynthesis pathway, being cholesterol the major sterol component in deuterostome membranes as well as a precursor for steroid hormone synthesis. Cytochrome P450 monooxygenase that catalyzes the three-step oxidative removal of the 14alpha-methyl group (C-32) of sterols such as lanosterol (lanosta-8,24-dien-3beta-ol) and 24,25-dihydrolanosterol (DHL) in the form of formate, and converts the sterols to 4,4-dimethyl-5alpha-cholesta-8,14,24-trien-3beta-ol and 4,4-dimethyl-8,14-cholestadien-3beta-ol, respectively, which are intermediates of cholesterol biosynthesis. Can also demethylate substrates not intrinsic to deuterostomes, such as eburicol (24-methylene-24,25-dihydrolanosterol), but at a lower rate than DHL. The sequence is that of Lanosterol 14-alpha demethylase from Danio rerio (Zebrafish).